A 494-amino-acid chain; its full sequence is Bifunctional protein HldE (494 aa).

The segment at 1–334 (MPTPILDFDA…RKILPHAYLA (334 aa)) is ribokinase. 209 to 212 (NRKE) lines the ATP pocket. Residue D279 is part of the active site. The interval 362-494 (FTNGCFDILH…LVHRARGGAK (133 aa)) is cytidylyltransferase.

It in the N-terminal section; belongs to the carbohydrate kinase PfkB family. This sequence in the C-terminal section; belongs to the cytidylyltransferase family. As to quaternary structure, homodimer.

It carries out the reaction D-glycero-beta-D-manno-heptose 7-phosphate + ATP = D-glycero-beta-D-manno-heptose 1,7-bisphosphate + ADP + H(+). The enzyme catalyses D-glycero-beta-D-manno-heptose 1-phosphate + ATP + H(+) = ADP-D-glycero-beta-D-manno-heptose + diphosphate. The protein operates within nucleotide-sugar biosynthesis; ADP-L-glycero-beta-D-manno-heptose biosynthesis; ADP-L-glycero-beta-D-manno-heptose from D-glycero-beta-D-manno-heptose 7-phosphate: step 1/4. Its pathway is nucleotide-sugar biosynthesis; ADP-L-glycero-beta-D-manno-heptose biosynthesis; ADP-L-glycero-beta-D-manno-heptose from D-glycero-beta-D-manno-heptose 7-phosphate: step 3/4. In terms of biological role, catalyzes the phosphorylation of D-glycero-D-manno-heptose 7-phosphate at the C-1 position to selectively form D-glycero-beta-D-manno-heptose-1,7-bisphosphate. Catalyzes the ADP transfer from ATP to D-glycero-beta-D-manno-heptose 1-phosphate, yielding ADP-D-glycero-beta-D-manno-heptose. The polypeptide is Bifunctional protein HldE (Bradyrhizobium diazoefficiens (strain JCM 10833 / BCRC 13528 / IAM 13628 / NBRC 14792 / USDA 110)).